We begin with the raw amino-acid sequence, 435 residues long: Putative GMP synthase [glutamine-hydrolyzing] 2 (435 aa).

Residues 1–120 enclose the Glutamine amidotransferase type-1; truncated domain; sequence MKQDMIVILD…VFDTCQAEAN (120 aa). The GMPS ATP-PPase domain occupies 121–310; it reads WNMANFVNDQ…LGLPYEMVYR (190 aa). Position 148-154 (148-154) interacts with ATP; sequence SGGVDSS.

As to quaternary structure, homodimer.

The enzyme catalyses XMP + L-glutamine + ATP + H2O = GMP + L-glutamate + AMP + diphosphate + 2 H(+). Its pathway is purine metabolism; GMP biosynthesis; GMP from XMP (L-Gln route): step 1/1. Its function is as follows. Catalyzes the synthesis of GMP from XMP. In Bacteroides thetaiotaomicron (strain ATCC 29148 / DSM 2079 / JCM 5827 / CCUG 10774 / NCTC 10582 / VPI-5482 / E50), this protein is Putative GMP synthase [glutamine-hydrolyzing] 2 (guaA2).